A 92-amino-acid polypeptide reads, in one-letter code: MGRSLKKGPFIADHLLSKIEKLNDRNEKQVIKTWSRASTILPLMVGHTIAVHNGRQHVPVFISEQMVGHKLGEFAPTRTYRGHGKSDKKAGR.

It belongs to the universal ribosomal protein uS19 family.

Functionally, protein S19 forms a complex with S13 that binds strongly to the 16S ribosomal RNA. This chain is Small ribosomal subunit protein uS19, found in Nostoc sp. (strain PCC 7120 / SAG 25.82 / UTEX 2576).